The following is a 137-amino-acid chain: Small integral membrane protein 9 (137 aa).

Positions 1 to 23 (MKPLKLFCIGLLLCPLVCLLLET) are cleaved as a signal peptide. The Extracellular segment spans residues 24-84 (APPPSALLTL…NHLSDFFKSS (61 aa)). A helical membrane pass occupies residues 85–105 (IPPAAIFALFVTTAIMRAAIV). The Cytoplasmic portion of the chain corresponds to 106 to 137 (NKRLEEPHRQWTIDQRSSLEMQNMNLIKLFGG).

The protein resides in the cell membrane. The polypeptide is Small integral membrane protein 9 (Smim9) (Mus musculus (Mouse)).